The sequence spans 256 residues: Polycomb group RING finger protein 5 (256 aa).

The RING-type zinc finger occupies 18-57 (CYICKGYLIKPTTVTECLHTFCKTCIVQHFEDSNDCPRCG). Composition is skewed to basic and acidic residues over residues 94–103 (ESEFWKKNKP) and 110–120 (DTSKADKPKVD). A disordered region spans residues 94–133 (ESEFWKKNKPQENGQDDTSKADKPKVDEEGDENEDDKDYH).

Component of a PRC1-like complex that contains PCGF5, RNF2 and UBE2D3. Interacts with RNF2; the interaction is direct. Interacts with CBX6, CBX7 and CBX8. Interacts with AUTS2; the interaction is direct. Identified in a complex that contains AUTS2, PCGF5, CSNK2B and RNF2.

The protein resides in the nucleus. Its subcellular location is the nucleoplasm. Functionally, component of a Polycomb group (PcG) multiprotein PRC1-like complex, a complex class required to maintain the transcriptionally repressive state of many genes, including Hox genes, throughout development. PcG PRC1 complex acts via chromatin remodeling and modification of histones; it mediates monoubiquitination of histone H2A 'Lys-119', rendering chromatin heritably changed in its expressibility. Within the PRC1-like complex, regulates RNF2 ubiquitin ligase activity. Plays a redundant role with PCGF3 as part of a PRC1-like complex that mediates monoubiquitination of histone H2A 'Lys-119' on the X chromosome and is required for normal silencing of one copy of the X chromosome in XX females. The sequence is that of Polycomb group RING finger protein 5 (PCGF5) from Homo sapiens (Human).